Consider the following 688-residue polypeptide: Glycine--tRNA ligase beta subunit (688 aa).

Belongs to the class-II aminoacyl-tRNA synthetase family. As to quaternary structure, tetramer of two alpha and two beta subunits.

Its subcellular location is the cytoplasm. It catalyses the reaction tRNA(Gly) + glycine + ATP = glycyl-tRNA(Gly) + AMP + diphosphate. The polypeptide is Glycine--tRNA ligase beta subunit (Syntrophotalea carbinolica (strain DSM 2380 / NBRC 103641 / GraBd1) (Pelobacter carbinolicus)).